Consider the following 432-residue polypeptide: Glutamyl-tRNA reductase (432 aa).

Residues 55–58 (TCNR), S114, 119–121 (ETQ), and Q125 each bind substrate. Residue C56 is the Nucleophile of the active site. 194-199 (GAGEMI) is a binding site for NADP(+).

This sequence belongs to the glutamyl-tRNA reductase family. In terms of assembly, homodimer.

The enzyme catalyses (S)-4-amino-5-oxopentanoate + tRNA(Glu) + NADP(+) = L-glutamyl-tRNA(Glu) + NADPH + H(+). It functions in the pathway porphyrin-containing compound metabolism; protoporphyrin-IX biosynthesis; 5-aminolevulinate from L-glutamyl-tRNA(Glu): step 1/2. Functionally, catalyzes the NADPH-dependent reduction of glutamyl-tRNA(Glu) to glutamate 1-semialdehyde (GSA). The polypeptide is Glutamyl-tRNA reductase (Burkholderia orbicola (strain MC0-3)).